A 63-amino-acid polypeptide reads, in one-letter code: Sec-independent protein translocase protein TatA (63 aa).

A helical transmembrane segment spans residues 1–21 (MGGLSVGSVVLIALVALLIFG).

The protein belongs to the TatA/E family. As to quaternary structure, forms a complex with TatC.

It localises to the cell membrane. In terms of biological role, part of the twin-arginine translocation (Tat) system that transports large folded proteins containing a characteristic twin-arginine motif in their signal peptide across membranes. TatA could form the protein-conducting channel of the Tat system. This is Sec-independent protein translocase protein TatA from Shouchella clausii (strain KSM-K16) (Alkalihalobacillus clausii).